Consider the following 122-residue polypeptide: MIQTLSKLKVADNSGAKEVRVIRNLGGSVRKFSGIGDIIICSVISATPGAVIKKGQVVKAVIVRTTRELRREDGTYIKFSENAAVLIKEDKTPRGTRIFGPIAREIKEAGFAKIASLAPEVL.

This sequence belongs to the universal ribosomal protein uL14 family. Part of the 50S ribosomal subunit. Forms a cluster with proteins L3 and L19. In the 70S ribosome, L14 and L19 interact and together make contacts with the 16S rRNA in bridges B5 and B8.

Functionally, binds to 23S rRNA. Forms part of two intersubunit bridges in the 70S ribosome. The sequence is that of Large ribosomal subunit protein uL14 from Mycoplasma capricolum subsp. capricolum (strain California kid / ATCC 27343 / NCTC 10154).